A 356-amino-acid polypeptide reads, in one-letter code: Aromatic dipeptide epimerase (356 aa).

Substrate contacts are provided by residues T136 and 161–163 (KVK). Mg(2+)-binding residues include D191, E219, and D244. Residues K268 and 320–322 (DLD) each bind substrate.

It belongs to the mandelate racemase/muconate lactonizing enzyme family. Requires Mg(2+) as cofactor.

Its function is as follows. Has epimerase activity with a variety of hydrophobic dipeptides (in vitro). Enzyme activity is highest with L-Phe-L-Tyr, but is still relatively low, suggesting that L-Phe-L-Tyr is not the physiological substrate. The chain is Aromatic dipeptide epimerase from Herpetosiphon aurantiacus (strain ATCC 23779 / DSM 785 / 114-95).